A 139-amino-acid polypeptide reads, in one-letter code: Nucleoside diphosphate kinase (139 aa).

Lysine 10, phenylalanine 58, arginine 86, threonine 92, arginine 103, and asparagine 113 together coordinate ATP. Histidine 116 serves as the catalytic Pros-phosphohistidine intermediate.

This sequence belongs to the NDK family. As to quaternary structure, homotetramer. Mg(2+) serves as cofactor.

It is found in the cytoplasm. The enzyme catalyses a 2'-deoxyribonucleoside 5'-diphosphate + ATP = a 2'-deoxyribonucleoside 5'-triphosphate + ADP. It catalyses the reaction a ribonucleoside 5'-diphosphate + ATP = a ribonucleoside 5'-triphosphate + ADP. In terms of biological role, major role in the synthesis of nucleoside triphosphates other than ATP. The ATP gamma phosphate is transferred to the NDP beta phosphate via a ping-pong mechanism, using a phosphorylated active-site intermediate. The sequence is that of Nucleoside diphosphate kinase from Nitratidesulfovibrio vulgaris (strain DSM 19637 / Miyazaki F) (Desulfovibrio vulgaris).